The following is a 174-amino-acid chain: Protein C (174 aa).

The protein belongs to the morbillivirus protein C family.

The sequence is that of Protein C (P/V/C) from Phocine distemper virus (PDV).